The sequence spans 1034 residues: Vacuolar membrane protease (1034 aa).

Residues 1 to 11 (MAVKNPFGFTT) are Cytoplasmic-facing. A helical membrane pass occupies residues 12-32 (GPVTFWLIVVYAAFLIPLVWI). Residues 33 to 418 (HESVPAVPSS…GFAILELRGL (386 aa)) are Vacuolar-facing. N-linked (GlcNAc...) asparagine glycans are attached at residues N51 and N141. Residues H200 and D212 each coordinate Zn(2+). The active-site Proton acceptor is the E246. The Zn(2+) site is built by E247, E272, and H345. The helical transmembrane segment at 419-439 (FAWTLTLLIVSPLVLALVTYI) threads the bilayer. Over 440 to 470 (LSRKDKYYFFSRKVTADEDDEPVSVGGWKGF) the chain is Cytoplasmic. The chain crosses the membrane as a helical span at residues 471–491 (FRFPFALVLSASITVLSAFLI). Residues 492-497 (RRVNPH) lie on the Vacuolar side of the membrane. The helical transmembrane segment at 498–518 (IIYSSPYAVWAMTLSLFFLVF) threads the bilayer. Residues 519 to 536 (WTIAKGASVVRPSALQRG) are Cytoplasmic-facing. The chain crosses the membrane as a helical span at residues 537–557 (YAHIWLFVISWVILVAVTAAA). Topologically, residues 558-567 (DRFKIASGYP) are vacuolar. Residues 568 to 588 (FAFFHSAVFVSALISLCDLFA) traverse the membrane as a helical segment. At 589-703 (LPSKQEFARN…NLPSWTWFFQ (115 aa)) the chain is on the cytoplasmic side. The tract at residues 623–653 (HSHVEDDVAEEPTETTPLRSGENGNGNNGTI) is disordered. A helical transmembrane segment spans residues 704 to 724 (LLLLAPITITVFLQIALFIVS). At 725 to 736 (AIHSAAADGNDP) the chain is on the vacuolar side. The chain crosses the membrane as a helical span at residues 737–757 (ILVYAAIAAFSIIILLPATPF). Residues 758–762 (IHRAS) are Cytoplasmic-facing. A helical transmembrane segment spans residues 763–783 (FYLPLFLLLVFFVTLIYNLVA). At 784 to 1034 (FPFSAENRLK…LVEGRKKFRA (251 aa)) the chain is on the vacuolar side. N-linked (GlcNAc...) asparagine glycans are attached at residues N805, N866, and N879.

This sequence belongs to the peptidase M28 family. Requires Zn(2+) as cofactor.

It is found in the vacuole membrane. In terms of biological role, may be involved in vacuolar sorting and osmoregulation. This chain is Vacuolar membrane protease, found in Colletotrichum graminicola (strain M1.001 / M2 / FGSC 10212) (Maize anthracnose fungus).